Consider the following 483-residue polypeptide: Replication factor C large subunit (483 aa).

43–50 (GKPGIGKT) serves as a coordination point for ATP. Over residues 417 to 442 (ELKKKKKEEDAKGKKARGSKKEKEPI) the composition is skewed to basic and acidic residues. The segment at 417 to 483 (ELKKKKKEED…KSSQSTLFSF (67 aa)) is disordered. Residues 448–457 (SIDSFSSQEP) are compositionally biased toward polar residues.

This sequence belongs to the activator 1 small subunits family. RfcL subfamily. As to quaternary structure, heteromultimer composed of small subunits (RfcS) and large subunits (RfcL).

In terms of biological role, part of the RFC clamp loader complex which loads the PCNA sliding clamp onto DNA. This is Replication factor C large subunit from Methanospirillum hungatei JF-1 (strain ATCC 27890 / DSM 864 / NBRC 100397 / JF-1).